A 388-amino-acid chain; its full sequence is Flavin-dependent monooxygenase (388 aa).

Residues 12 to 15, 34 to 36, 44 to 47, R105, Y267, D289, and 296 to 302 each bind FAD; these read VGVA, EKS, QALD, and PLSGQGN.

The protein belongs to the aromatic-ring hydroxylase family. FAD is required as a cofactor.

It carries out the reaction a tetracycline + NADPH + O2 + H(+) = a (1S,10aS)-3-(CONH2)-1-(Me2N)-3,3a,4,6-(HO)4-2,5-dioxo-1H,10aH,11H,11aH-cyclopenta[b]anthracene + CO + NADP(+) + H2O. The enzyme catalyses 7-chlorotetracycline + NADPH + O2 + H(+) = (1S,10S,10aS)-3-(CONH2)-9-Cl-1-(Me2N)-3,3a,4,10-(HO)4-10-Me-2,5-dioxo-1H,10aH,11H,11aH-cyclopenta[b]anthracen-6-olate + CO + NADP(+) + H2O. With respect to regulation, inhibited by anhydrotetracycline. Its function is as follows. An FAD-requiring monooxygenase active on tetracycline antibiotic and some of its derivatives, which leads to their inactivation. Expression in E.coli confers high resistance to tetracycline and oxytetracycline, does not confer resistance to minocycline or tigecycline. Degrades tetracycline and oxytetracycline; the reaction requires NADPH. Degrades and confers resistance to chlortetracycline. This Unknown prokaryotic organism protein is Flavin-dependent monooxygenase (tet(50)).